We begin with the raw amino-acid sequence, 370 residues long: DNA replication and repair protein RecF (370 aa).

30–37 (GENAQGKT) provides a ligand contact to ATP.

This sequence belongs to the RecF family.

It is found in the cytoplasm. In terms of biological role, the RecF protein is involved in DNA metabolism; it is required for DNA replication and normal SOS inducibility. RecF binds preferentially to single-stranded, linear DNA. It also seems to bind ATP. This Bacillus pumilus (strain SAFR-032) protein is DNA replication and repair protein RecF.